A 251-amino-acid chain; its full sequence is Hydroxyacylglutathione hydrolase (251 aa).

Zn(2+) contacts are provided by histidine 53, histidine 55, aspartate 57, histidine 58, histidine 110, aspartate 127, and histidine 165.

It belongs to the metallo-beta-lactamase superfamily. Glyoxalase II family. Monomer. Zn(2+) is required as a cofactor.

It catalyses the reaction an S-(2-hydroxyacyl)glutathione + H2O = a 2-hydroxy carboxylate + glutathione + H(+). The protein operates within secondary metabolite metabolism; methylglyoxal degradation; (R)-lactate from methylglyoxal: step 2/2. In terms of biological role, thiolesterase that catalyzes the hydrolysis of S-D-lactoyl-glutathione to form glutathione and D-lactic acid. The polypeptide is Hydroxyacylglutathione hydrolase (Edwardsiella ictaluri (strain 93-146)).